The primary structure comprises 101 residues: Integration host factor subunit beta (101 aa).

The tract at residues 62 to 84 (RNPKTGESVALPGKHVPHFKPGK) is disordered.

It belongs to the bacterial histone-like protein family. As to quaternary structure, heterodimer of an alpha and a beta chain.

This protein is one of the two subunits of integration host factor, a specific DNA-binding protein that functions in genetic recombination as well as in transcriptional and translational control. This Stenotrophomonas maltophilia (strain K279a) protein is Integration host factor subunit beta.